A 289-amino-acid chain; its full sequence is 26S proteasome non-ATPase regulatory subunit 8 (289 aa).

Ser-45 carries the post-translational modification Phosphoserine. Residues 101-270 enclose the PCI domain; the sequence is PSFERYMAQL…QQKPEDTTIP (170 aa). A Glycyl lysine isopeptide (Lys-Gly) (interchain with G-Cter in SUMO2) cross-link involves residue Lys-236.

It belongs to the proteasome subunit S14 family. In terms of assembly, component of the 19S proteasome regulatory particle complex. The 26S proteasome consists of a 20S core particle (CP) and two 19S regulatory subunits (RP). The regulatory particle is made of a lid composed of 9 subunits including PSMD8, a base containing 6 ATPases and few additional components. Interacts with DDI2. Interacts with TASOR.

Functionally, component of the 26S proteasome, a multiprotein complex involved in the ATP-dependent degradation of ubiquitinated proteins. This complex plays a key role in the maintenance of protein homeostasis by removing misfolded or damaged proteins, which could impair cellular functions, and by removing proteins whose functions are no longer required. Therefore, the proteasome participates in numerous cellular processes, including cell cycle progression, apoptosis, or DNA damage repair. This Pongo abelii (Sumatran orangutan) protein is 26S proteasome non-ATPase regulatory subunit 8 (PSMD8).